A 31-amino-acid polypeptide reads, in one-letter code: Nemertide alpha-6 (31 aa).

Disulfide bonds link Cys-2–Cys-16, Cys-9–Cys-20, and Cys-15–Cys-26. Residues Pro-28 and Pro-29 each carry the 4-hydroxyproline modification.

It belongs to the nemertide family. Confined to the epidermis and to the mucus layer.

It is found in the secreted. Its function is as follows. Highly potent toxin against both insect and some mammalian sodium channels (Nav). It potently inhibits inactivation of insect sodium channels of B.germanica (BgNav1) (EC(50)=2.6 nM) and also delays the inactivation of mammalian Nav with potent activity on Nav1.1/SCN1A (hNav1.1/SCN1A; EC(50)=7.9 nM, rNav1.2/SCN2A; EC(50)=24.3 nM, rNav1.3/SCN3A; EC(50)=105.6 nM, rNav1.4/SCN4A; EC(50)=46.4 nM, hNav1.5/SCN5A; EC(50)=215.2 nM, mNav1.6/SCN8A; EC(50)=36.3 nM, hNav1.9/SCN9A; EC(50)=97.2 nM). 1 uM is enough to completely inhibits the inactivation, resulting in sustained non-inactivating currents. In addition, the toxin significantly enhances the recovery from inactivation, and the open state is not required for the toxin to interact with the channel. In vivo, injection into brine shrimp (Artemia salina) stops movement or causes death after 24 hours (EC(50)=2.8 uM). This is Nemertide alpha-6 from Lineus sanguineus (Ribbon worm).